Reading from the N-terminus, the 273-residue chain is Type III pantothenate kinase (273 aa).

7–14 serves as a coordination point for ATP; sequence DVGNTAIK. Residues Phe-119 and 124 to 127 each bind substrate; that span reads GIDR. Asp-126 acts as the Proton acceptor in catalysis. Residue Asp-146 participates in K(+) binding. Thr-149 contacts ATP. Residue Thr-206 coordinates substrate.

This sequence belongs to the type III pantothenate kinase family. Homodimer. Requires NH4(+) as cofactor. K(+) is required as a cofactor.

It is found in the cytoplasm. It carries out the reaction (R)-pantothenate + ATP = (R)-4'-phosphopantothenate + ADP + H(+). Its pathway is cofactor biosynthesis; coenzyme A biosynthesis; CoA from (R)-pantothenate: step 1/5. Its function is as follows. Catalyzes the phosphorylation of pantothenate (Pan), the first step in CoA biosynthesis. In Rhodopirellula baltica (strain DSM 10527 / NCIMB 13988 / SH1), this protein is Type III pantothenate kinase.